Reading from the N-terminus, the 446-residue chain is ATP-dependent protease ATPase subunit HslU (446 aa).

ATP contacts are provided by residues Ile18, 60-65 (GVGKTE), Asp259, Glu324, and Arg396.

The protein belongs to the ClpX chaperone family. HslU subfamily. As to quaternary structure, a double ring-shaped homohexamer of HslV is capped on each side by a ring-shaped HslU homohexamer. The assembly of the HslU/HslV complex is dependent on binding of ATP.

It is found in the cytoplasm. In terms of biological role, ATPase subunit of a proteasome-like degradation complex; this subunit has chaperone activity. The binding of ATP and its subsequent hydrolysis by HslU are essential for unfolding of protein substrates subsequently hydrolyzed by HslV. HslU recognizes the N-terminal part of its protein substrates and unfolds these before they are guided to HslV for hydrolysis. The polypeptide is ATP-dependent protease ATPase subunit HslU (Vibrio atlanticus (strain LGP32) (Vibrio splendidus (strain Mel32))).